Here is a 123-residue protein sequence, read N- to C-terminus: Large ribosomal subunit protein bL17 (123 aa).

The protein belongs to the bacterial ribosomal protein bL17 family. As to quaternary structure, part of the 50S ribosomal subunit. Contacts protein L32.

This is Large ribosomal subunit protein bL17 from Dichelobacter nodosus (strain VCS1703A).